Reading from the N-terminus, the 236-residue chain is Lipid A 4'-phosphatase (236 aa).

A run of 5 helical transmembrane segments spans residues 26 to 46 (FFYL…FLFF), 58 to 78 (FIVG…SSFF), 134 to 153 (YTWT…IYIG), 160 to 182 (IIPG…LYAR), and 200 to 220 (GDSI…MLCM).

It belongs to the lipid A LpxF 4'-phosphatase family.

The protein resides in the cell inner membrane. Its pathway is bacterial outer membrane biogenesis; LPS lipid A biosynthesis. Functionally, removes the 4'-phosphate group from lipid A species. Absence of phosphate groups in lipid A renders the bacteria resistant to host-derived cationic antimicrobial peptides (CAMP) and allows it to camouflage itself from the host innate immune response. Removal of the 4'-phosphate may be required to generate the substrate for deacylation of the pentaacyl lipid A to the tetraccylated lipid A species. This is Lipid A 4'-phosphatase from Porphyromonas gingivalis (strain ATCC 33277 / DSM 20709 / CIP 103683 / JCM 12257 / NCTC 11834 / 2561).